The primary structure comprises 582 residues: V-type ATP synthase alpha chain (582 aa).

231–238 (GPFGSGKT) is an ATP binding site.

Belongs to the ATPase alpha/beta chains family.

The enzyme catalyses ATP + H2O + 4 H(+)(in) = ADP + phosphate + 5 H(+)(out). Produces ATP from ADP in the presence of a proton gradient across the membrane. The V-type alpha chain is a catalytic subunit. The chain is V-type ATP synthase alpha chain from Deinococcus geothermalis (strain DSM 11300 / CIP 105573 / AG-3a).